The following is a 99-amino-acid chain: Small ribosomal subunit protein bS20 (99 aa).

The protein belongs to the bacterial ribosomal protein bS20 family.

Binds directly to 16S ribosomal RNA. The sequence is that of Small ribosomal subunit protein bS20 from Chlamydia pneumoniae (Chlamydophila pneumoniae).